The chain runs to 610 residues: MNSQDLKKRQEKIRNFSIIAHIDHGKSTLADRILEKTETVSSREMQAQLLDSMDLERERGITIKLNAIELNYTARDGETYIFHLIDTPGHVDFTYEVSRSLAACEGAILVVDAAQGIEAQTLANVYLALDNDLEILPVINKIDLPAADPERVCHEVEDVIGLDASEAVLASAKAGIGIEEILEQIVEKVPAPTGDVDAPLQALIFDSVYDAYRGVILQVRIVNGIVKPGDKIQMMSNGKTFDVTEVGIFTPKAVGRDFLATGDVGYVAASIKTVADTRVGDTVTLANNPAKEALHGYKQMNPMVFAGIYPIESNKYNDLREALEKLQLNDASLQFEPETSQALGFGFRCGFLGLLHMDVIQERLEREFNIDLIMTAPSVVYHVHTTDEDMIEVSNPSEFPDPTRVAFIEEPYVKAQIMVPQEFVGAVMELSQRKRGDFVTMDYIDDNRVNVIYQIPLAEIVFDFFDKLKSSTRGYASFDYDMSEYRRSQLVKMDILLNGDKVDALSFIVHKEFAYERGKIIVEKLKKIIPRQQFEVPIQAAIGQKIVARSDIKALRKNVLAKCYGGDVSRKRKLLEKQKAGKKRMKAIGSVEVPQEAFLSVLSMDDDAKK.

Residues 11–193 (EKIRNFSIIA…QIVEKVPAPT (183 aa)) enclose the tr-type G domain. GTP-binding positions include 23 to 28 (DHGKST) and 140 to 143 (NKID).

It belongs to the TRAFAC class translation factor GTPase superfamily. Classic translation factor GTPase family. LepA subfamily.

It is found in the cell membrane. The enzyme catalyses GTP + H2O = GDP + phosphate + H(+). In terms of biological role, required for accurate and efficient protein synthesis under certain stress conditions. May act as a fidelity factor of the translation reaction, by catalyzing a one-codon backward translocation of tRNAs on improperly translocated ribosomes. Back-translocation proceeds from a post-translocation (POST) complex to a pre-translocation (PRE) complex, thus giving elongation factor G a second chance to translocate the tRNAs correctly. Binds to ribosomes in a GTP-dependent manner. This Streptococcus pyogenes serotype M3 (strain ATCC BAA-595 / MGAS315) protein is Elongation factor 4.